We begin with the raw amino-acid sequence, 304 residues long: uncharacterized protein (304 aa).

Coiled coils occupy residues K3–I35 and K89–L132. The disordered stretch occupies residues L96–E121.

This is an uncharacterized protein from Acanthamoeba polyphaga (Amoeba).